We begin with the raw amino-acid sequence, 132 residues long: Subtelomeric hrmA-associated cluster protein AFUB_079000 (132 aa).

Functionally, part of the subtelomeric hrmA-associated cluster (HAC) containing genes that alter the hyphal surface (such as reduced total chitin or increased beta-glucan exposure) and perturb inter-hyphal interactions within the developing biofilms, resulting in a loss of vertically aligned polarized growing filaments. Consequently, this hypoxia-typic morphotype (called H-MORPH) with altered biofilm architecture leads to increased hypoxia fitness, increased host inflammation, rapid disease progression, and mortality in a murine model of invasive aspergillosis. This Aspergillus fumigatus (strain CBS 144.89 / FGSC A1163 / CEA10) (Neosartorya fumigata) protein is Subtelomeric hrmA-associated cluster protein AFUB_079000.